The sequence spans 329 residues: Probable fructokinase-2 (329 aa).

Belongs to the carbohydrate kinase PfkB family.

The enzyme catalyses D-fructose + ATP = D-fructose 6-phosphate + ADP + H(+). It participates in glycan biosynthesis; starch biosynthesis. In terms of biological role, may play an important role in maintaining the flux of carbon towards starch formation. The protein is Probable fructokinase-2 of Arabidopsis thaliana (Mouse-ear cress).